A 278-amino-acid chain; its full sequence is Hydroxyethylthiazole kinase (278 aa).

M49 serves as a coordination point for substrate. 2 residues coordinate ATP: N125 and S171. A substrate-binding site is contributed by G198.

Belongs to the Thz kinase family. It depends on Mg(2+) as a cofactor.

The catalysed reaction is 5-(2-hydroxyethyl)-4-methylthiazole + ATP = 4-methyl-5-(2-phosphooxyethyl)-thiazole + ADP + H(+). It participates in cofactor biosynthesis; thiamine diphosphate biosynthesis; 4-methyl-5-(2-phosphoethyl)-thiazole from 5-(2-hydroxyethyl)-4-methylthiazole: step 1/1. Functionally, catalyzes the phosphorylation of the hydroxyl group of 4-methyl-5-beta-hydroxyethylthiazole (THZ). This is Hydroxyethylthiazole kinase from Natronomonas pharaonis (strain ATCC 35678 / DSM 2160 / CIP 103997 / JCM 8858 / NBRC 14720 / NCIMB 2260 / Gabara) (Halobacterium pharaonis).